A 581-amino-acid chain; its full sequence is MGEKMAEEERFPNTTHEGFNVTLHTTLVVTTKLVLPTPGKPILPVQTGEQAQQEEQSSGMTIFFSLLVLAICIILVHLLIRYRLHFLPESVAVVSLGILMGAVIKIIEFKKLANWKEEEMFRPNMFFLLLLPPIIFESGYSLHKGNFFQNIGSITLFAVFGTAISAFVVGGGIYFLGQADVISKLNMTDSFAFGSLISAVDPVATIAIFNALHVDPVLNMLVFGESILNDAVSIVLTNTAEGLTRKNMSDVSGWQTFLQALDYFLKMFFGSAALGTLTGLISALVLKHIDLRKTPSLEFGMMIIFAYLPYGLAEGISLSGIMAILFSGIVMSHYTHHNLSPVTQILMQQTLRTVAFLCETCVFAFLGLSIFSFPHKFEISFVIWCIVLVLFGRAVNIFPLSYLLNFFRDHKITPKMMFIMWFSGLRGAIPYALSLHLDLEPMEKRQLIGTTTIVIVLFTILLLGGSTMPLIRLMDIEDAKAHRRNKKDVNLSKTEKMGNTVESEHLSELTEEEYEAHYIRRQDLKGFVWLDAKYLNPFFTRRLTQEDLHHGRIQMKTLTNKWYEEVRQGPSGSEDDEQELL.

The next 11 helical transmembrane spans lie at 60–80 (MTIF…HLLI), 84–104 (LHFL…GAVI), 123–143 (PNMF…YSLH), 156–176 (LFAV…IYFL), 191–211 (FAFG…IFNA), 264–284 (FLKM…ISAL), 311–331 (GLAE…GIVM), 354–374 (VAFL…FSFP), 379–399 (ISFV…NIFP), 417–437 (MFIM…SLHL), and 451–471 (TTIV…MPLI). Thr510 carries the phosphothreonine modification. Residues Ser571 and Ser573 each carry the phosphoserine modification.

Belongs to the monovalent cation:proton antiporter 1 (CPA1) transporter (TC 2.A.36) family. Ubiquitous. Strongly expressed in skeletal muscle and kidney. Detected throughout the entire gastrointestinal tract, with high expression detected in stomach, duodenum and ascending colon.

Its subcellular location is the golgi apparatus membrane. The protein resides in the golgi apparatus. The protein localises to the trans-Golgi network membrane. It localises to the endosome. It is found in the multivesicular body membrane. Its subcellular location is the apical cell membrane. The protein resides in the cytoplasmic vesicle. The protein localises to the secretory vesicle. It localises to the acrosome. The catalysed reaction is Na(+)(in) + H(+)(out) = Na(+)(out) + H(+)(in). HOE642 inhibits SLC9A8 activity. Functionally, na(+)/H(+) antiporter. Mediates the electoneutral exchange of intracellular H(+) ions for extracellular Na(+) in 1:1 stoichiometry. Acts as an Na(+)/H(+) exchanger in the trans-Golgi. Contributes to the regulation of pH regulation of Golgi apparatus, and consequently, in protein trafficking and endosomal morphology. In germ cells, plays a crucial role in acrosome biogenesis and sperm development, probably by playing a role in the fusion of the Golgi-derived vesicles that form the acrosomal cap. Can also be active at the cell surface of specialized cells. In the small intestine, at the cell membrane, plays a major physiological role in transepithelial absorption of Na(+) and regulates intracellular pH homeostasis of intestinal epithelial cells. Acts as an important regulator of mucosal integrity in the intestine and in the stomach, could mediate the pH fluctuation necessary for mucin exocytosis or assist membrane trafficking of other proteins. Plays a role in photoreceptor survival and in the maintenance of intracellular pH homeostasis in retinal pigment epithelium (RPE cells). This chain is Sodium/hydrogen exchanger 8, found in Homo sapiens (Human).